The following is a 610-amino-acid chain: Cytosolic 5'-nucleotidase 1B (610 aa).

Disordered stretches follow at residues 1 to 34 (MSQT…DKTG) and 101 to 277 (GSQE…DEDD). Residues 9-34 (KKNEPGMRSSKESLEAEKRKESDKTG) are compositionally biased toward basic and acidic residues. A compositionally biased stretch (polar residues) spans 119 to 132 (SQWSRISRSPSTKA). A compositionally biased stretch (low complexity) spans 148–166 (PSSSTSSRTPSTSPSLHDS). Residues 167–183 (SPPPLSGQPSLQPPASP) show a composition bias toward pro residues. The segment covering 236 to 265 (SRTSPTEWKSSSQRRGIYPASTQLDRNSLS) has biased composition (polar residues). The active-site Nucleophile is D467.

The protein belongs to the 5'-nucleotidase type 3 family. The cofactor is Mg(2+). In terms of tissue distribution, highly expressed in testis, placenta and pancreas. Detected at lower levels in heart, kidney, liver and lung.

The protein resides in the cytoplasm. The catalysed reaction is a ribonucleoside 5'-phosphate + H2O = a ribonucleoside + phosphate. It catalyses the reaction AMP + H2O = adenosine + phosphate. Activated by ADP. Its function is as follows. Catalyzes the hydrolysis of nucleotide monophosphates, releasing inorganic phosphate and the corresponding nucleoside, AMP is the major substrate. This Homo sapiens (Human) protein is Cytosolic 5'-nucleotidase 1B (NT5C1B).